The sequence spans 150 residues: MPKKSVRHIKIREIISNEQIETQDELVKRLNEYDLNVTQATVSRDIKELQLIKVPAPTGQYVYSLPNDRRYHPLEKLGRYLMDSFVNIEGTGNLLVLKTLPGNAQSIGAILDQIDWDEVLGTICGDDTCLLICRDEEASEEIKTRIFNLL.

It belongs to the ArgR family.

It is found in the cytoplasm. Its pathway is amino-acid biosynthesis; L-arginine biosynthesis [regulation]. Functionally, regulates arginine biosynthesis genes. The chain is Arginine repressor from Staphylococcus epidermidis (strain ATCC 35984 / DSM 28319 / BCRC 17069 / CCUG 31568 / BM 3577 / RP62A).